Consider the following 165-residue polypeptide: Large ribosomal subunit protein uL10 (165 aa).

The protein belongs to the universal ribosomal protein uL10 family. In terms of assembly, part of the ribosomal stalk of the 50S ribosomal subunit. The N-terminus interacts with L11 and the large rRNA to form the base of the stalk. The C-terminus forms an elongated spine to which L12 dimers bind in a sequential fashion forming a multimeric L10(L12)X complex.

Forms part of the ribosomal stalk, playing a central role in the interaction of the ribosome with GTP-bound translation factors. This chain is Large ribosomal subunit protein uL10, found in Sodalis glossinidius (strain morsitans).